A 362-amino-acid polypeptide reads, in one-letter code: Major capsid protein VP1 (362 aa).

A disordered region spans residues 1–21 (MAPTKRKGSCPGAAPKKPKEP). The short motif at 5-19 (KRKGSCPGAAPKKPK) is the Bipartite nuclear localization signal element. The segment at 302–362 (ISFLLSDLIN…EFGQTTTRMQ (61 aa)) is C-terminal arm. T338 carries the phosphothreonine; by host modification.

This sequence belongs to the polyomaviruses coat protein VP1 family. As to quaternary structure, homomultimer; disulfide-linked. The virus capsid is composed of 72 icosahedral units, each one composed of five disulfide-linked copies of VP1. Interacts with agnoprotein. Interacts with minor capsid proteins VP2 and VP3. Interacts with host HSPA8; this interaction probably participates in virus assembly. Interacts with host SP1; this interaction enhances the efficiency of viral packaging.

Its subcellular location is the virion. The protein resides in the host nucleus. The protein localises to the host endoplasmic reticulum. In terms of biological role, forms an icosahedral capsid with a T=7 symmetry and a 40 nm diameter. The capsid is composed of 72 pentamers linked to each other by disulfide bonds and associated with VP2 or VP3 proteins. Binds to N-glycolylneuraminic analog of the ganglioside GM1 on the cell surface to provide virion attachment to target cell. Once attached, the virion is internalized by caveolin-mediated endocytosis and traffics to the endoplasmic reticulum. Inside the endoplasmic reticulum, the protein folding machinery isomerizes VP1 interpentamer disulfide bonds, thereby triggering initial uncoating. Next, the virion uses the endoplasmic reticulum-associated degradation machinery to probably translocate in the cytosol before reaching the nucleus. Nuclear entry of the viral DNA involves the selective exposure and importin recognition of VP2/Vp3 nuclear localization signal. The assembly takes place in the cell nucleus. Encapsulates the genomic DNA and participates in rearranging nucleosomes around the viral DNA. The viral progenies exit the cells by lytic release. The sequence is that of Major capsid protein VP1 from Macaca (macaques).